Reading from the N-terminus, the 204-residue chain is Probable nicotinate-nucleotide adenylyltransferase (204 aa).

The protein belongs to the NadD family.

The catalysed reaction is nicotinate beta-D-ribonucleotide + ATP + H(+) = deamido-NAD(+) + diphosphate. It functions in the pathway cofactor biosynthesis; NAD(+) biosynthesis; deamido-NAD(+) from nicotinate D-ribonucleotide: step 1/1. Catalyzes the reversible adenylation of nicotinate mononucleotide (NaMN) to nicotinic acid adenine dinucleotide (NaAD). The polypeptide is Probable nicotinate-nucleotide adenylyltransferase (Mycobacterium sp. (strain JLS)).